The following is a 166-amino-acid chain: Phospholipase A2 inhibitor A1 (166 aa).

The first 19 residues, 1-19, serve as a signal peptide directing secretion; that stretch reads MRLILLSGLLLLGIFLANG. One can recognise a C-type lectin domain in the interval 46 to 161; sequence LKGSFLIVHK…CDDNLLVVCE (116 aa). 2 disulfides stabilise this stretch: Cys-83–Cys-160 and Cys-138–Cys-152. N-linked (GlcNAc...) asparagine glycosylation occurs at Asn-122.

This sequence belongs to the alpha-type phospholipase A2 inhibitor family. As to quaternary structure, homotrimer; non-covalently linked. As to expression, expressed by the liver.

Its subcellular location is the secreted. Its function is as follows. This phospholipase A2 inhibitor binds directly phospholipase A2 in the presence or absence of calcium. The protein is Phospholipase A2 inhibitor A1 of Bothrops neuwiedi (Neuwied's lancehead).